Here is a 186-residue protein sequence, read N- to C-terminus: GMP synthase [glutamine-hydrolyzing] subunit A (186 aa).

Residues 2-186 (SIVIINNFGQ…ENFNKICENY (185 aa)) enclose the Glutamine amidotransferase type-1 domain. Cysteine 76 (nucleophile) is an active-site residue. Residues histidine 163 and glutamate 165 contribute to the active site.

Heterodimer composed of a glutamine amidotransferase subunit (A) and a GMP-binding subunit (B).

It carries out the reaction XMP + L-glutamine + ATP + H2O = GMP + L-glutamate + AMP + diphosphate + 2 H(+). It functions in the pathway purine metabolism; GMP biosynthesis; GMP from XMP (L-Gln route): step 1/1. Its function is as follows. Catalyzes the synthesis of GMP from XMP. This Methanosphaera stadtmanae (strain ATCC 43021 / DSM 3091 / JCM 11832 / MCB-3) protein is GMP synthase [glutamine-hydrolyzing] subunit A.